Consider the following 769-residue polypeptide: 5-methyltetrahydropteroyltriglutamate--homocysteine methyltransferase (769 aa).

Residues 17–20 (RELK) and Lys118 contribute to the 5-methyltetrahydropteroyltri-L-glutamate site. L-homocysteine contacts are provided by residues 441-443 (IGS) and Glu494. L-methionine is bound by residues 441–443 (IGS) and Glu494. Residues 525-526 (RC) and Trp571 contribute to the 5-methyltetrahydropteroyltri-L-glutamate site. Asp609 contributes to the L-homocysteine binding site. An L-methionine-binding site is contributed by Asp609. Residue Glu615 participates in 5-methyltetrahydropteroyltri-L-glutamate binding. The Zn(2+) site is built by His651, Cys653, and Glu675. The Proton donor role is filled by His705. Cys737 serves as a coordination point for Zn(2+).

The protein belongs to the vitamin-B12 independent methionine synthase family. It depends on Zn(2+) as a cofactor.

The catalysed reaction is 5-methyltetrahydropteroyltri-L-glutamate + L-homocysteine = tetrahydropteroyltri-L-glutamate + L-methionine. Its pathway is amino-acid biosynthesis; L-methionine biosynthesis via de novo pathway; L-methionine from L-homocysteine (MetE route): step 1/1. Catalyzes the transfer of a methyl group from 5-methyltetrahydrofolate to homocysteine resulting in methionine formation. This is 5-methyltetrahydropteroyltriglutamate--homocysteine methyltransferase from Blochmanniella floridana.